Consider the following 199-residue polypeptide: 5'-deoxynucleotidase HDDC2 (199 aa).

At A2 the chain carries N-acetylalanine. A Phosphoserine modification is found at S5. The HD domain maps to 41–143; it reads VSDHMYRMAV…VKQLDQCEMI (103 aa). Residues H44, H72, D73, E76, D81, I82, and D138 each contribute to the a divalent metal cation site. Residue S199 is modified to Phosphoserine.

The protein belongs to the HDDC2 family. As to quaternary structure, homodimer. Mn(2+) serves as cofactor. It depends on Co(2+) as a cofactor. Mg(2+) is required as a cofactor.

The catalysed reaction is a 2'-deoxyribonucleoside 5'-phosphate + H2O = a 2'-deoxyribonucleoside + phosphate. Its function is as follows. Catalyzes the dephosphorylation of the nucleoside 5'-monophosphates deoxyadenosine monophosphate (dAMP), deoxycytidine monophosphate (dCMP), deoxyguanosine monophosphate (dGMP) and deoxythymidine monophosphate (dTMP). The polypeptide is 5'-deoxynucleotidase HDDC2 (Hddc2) (Mus musculus (Mouse)).